Reading from the N-terminus, the 763-residue chain is Phosphoglycerol transferase I (763 aa).

Helical transmembrane passes span 1 to 21, 26 to 46, 77 to 97, and 108 to 128; these read MSELLSVALFLASVLIYAWKA, WWFAATLTVLGLFVILNITLY, ILPGIGIALALVAVFGALGWV, and VGYSLLALLLALGSVDASPAF.

It belongs to the OpgB family.

It is found in the cell inner membrane. It catalyses the reaction a phosphatidylglycerol + a membrane-derived-oligosaccharide D-glucose = a 1,2-diacyl-sn-glycerol + a membrane-derived-oligosaccharide 6-(glycerophospho)-D-glucose.. Its pathway is glycan metabolism; osmoregulated periplasmic glucan (OPG) biosynthesis. Transfers a phosphoglycerol residue from phosphatidylglycerol to the membrane-bound nascent glucan backbones. The sequence is that of Phosphoglycerol transferase I from Salmonella choleraesuis (strain SC-B67).